Here is a 662-residue protein sequence, read N- to C-terminus: Methionine--tRNA ligase (662 aa).

Positions 14–24 (YYPSGKLHLGS) match the 'HIGH' region motif. A 'KMSKS' region motif is present at residues 308-312 (KMSKS). Position 311 (Lys311) interacts with ATP. The tRNA-binding domain maps to 559 to 662 (DFEKIELKVA…DDVPAGSLIG (104 aa)).

This sequence belongs to the class-I aminoacyl-tRNA synthetase family. MetG type 2B subfamily. As to quaternary structure, homodimer.

It is found in the cytoplasm. It catalyses the reaction tRNA(Met) + L-methionine + ATP = L-methionyl-tRNA(Met) + AMP + diphosphate. Is required not only for elongation of protein synthesis but also for the initiation of all mRNA translation through initiator tRNA(fMet) aminoacylation. This Lactococcus lactis subsp. lactis (strain IL1403) (Streptococcus lactis) protein is Methionine--tRNA ligase (metG).